We begin with the raw amino-acid sequence, 263 residues long: Aquaporin Lacbi1:233199 (263 aa).

Residues 1-17 (MFTLAHHRHAIRKPMAE) are Cytoplasmic-facing. The chain crosses the membrane as a helical span at residues 18 to 38 (FFGVALLVIFGAGAACQVVLS). At 39-44 (TNPNSF) the chain is on the extracellular side. The chain crosses the membrane as a helical span at residues 45-65 (LSINFGWAIGIAMGAWISGSI). Residues 66-88 (SGGHINPAITIAMATYRGFPWRE) are Cytoplasmic-facing. The NPA 1 motif lies at 71-73 (NPA). A helical membrane pass occupies residues 89–109 (VPSYILAQVLGGVVGAALVYA). Residues 110-143 (NYIHAIDVFEGGRHIRTQATASLFATYALPYMTQ) are Extracellular-facing. The helical transmembrane segment at 144 to 164 (VSCFFSEFLATAVLAMMVLAL) threads the bilayer. The Cytoplasmic segment spans residues 165–174 (TDNRNGAPTN). A helical membrane pass occupies residues 175–195 (GLSPFALFVLFIGLGASLGME). Over 196-227 (TAYALNPARDFGPRLFLAMAGYGKALFNYRSQ) the chain is Extracellular. Positions 201–203 (NPA) match the NPA 2 motif. The helical transmembrane segment at 228–248 (YWLWAPIIAPVLGAQAGGLLY) threads the bilayer. Residues 249 to 263 (DTFLYDGDDSPIKWR) lie on the Cytoplasmic side of the membrane.

This sequence belongs to the MIP/aquaporin (TC 1.A.8) family.

The protein resides in the membrane. The enzyme catalyses H2O(in) = H2O(out). Probable water channel required to facilitate the transport of water across membranes. The chain is Aquaporin Lacbi1:233199 from Laccaria bicolor (strain S238N-H82 / ATCC MYA-4686) (Bicoloured deceiver).